Reading from the N-terminus, the 250-residue chain is DNA repair protein RecO (250 aa).

This sequence belongs to the RecO family.

Its function is as follows. Involved in DNA repair and RecF pathway recombination. This chain is DNA repair protein RecO, found in Staphylococcus aureus (strain MRSA252).